A 151-amino-acid polypeptide reads, in one-letter code: Deoxyuridine 5'-triphosphate nucleotidohydrolase (151 aa).

Substrate-binding positions include R70–G72, N83, L87–D89, and M97.

It belongs to the dUTPase family. The cofactor is Mg(2+).

The enzyme catalyses dUTP + H2O = dUMP + diphosphate + H(+). Its pathway is pyrimidine metabolism; dUMP biosynthesis; dUMP from dCTP (dUTP route): step 2/2. This enzyme is involved in nucleotide metabolism: it produces dUMP, the immediate precursor of thymidine nucleotides and it decreases the intracellular concentration of dUTP so that uracil cannot be incorporated into DNA. The protein is Deoxyuridine 5'-triphosphate nucleotidohydrolase of Shigella flexneri serotype 5b (strain 8401).